The sequence spans 889 residues: Cytoplasmic aconitate hydratase (889 aa).

Residues Q86 and 205–207 (DSH) each bind substrate. 3 residues coordinate [4Fe-4S] cluster: C437, C503, and C506. Substrate contacts are provided by residues R536, R541, R699, and 779–780 (SR).

Belongs to the aconitase/IPM isomerase family. As to quaternary structure, interacts (when associated with the 4Fe-4S) with FBXL5. Interacts with frataxin(81-210). [4Fe-4S] cluster serves as cofactor.

Its subcellular location is the cytoplasm. The protein resides in the cytosol. The catalysed reaction is citrate = D-threo-isocitrate. Its function is as follows. Bifunctional iron sensor that switches between 2 activities depending on iron availability. Iron deprivation, promotes its mRNA binding activity through which it regulates the expression of genes involved in iron uptake, sequestration and utilization. Binds to iron-responsive elements (IRES) in the untranslated region of target mRNAs preventing for instance the translation of ferritin and aminolevulinic acid synthase and stabilizing the transferrin receptor mRNA. In terms of biological role, conversely, when cellular iron levels are high, binds a 4Fe-4S cluster which precludes RNA binding activity and promotes the aconitase activity, the isomerization of citrate to isocitrate via cis-aconitate. This is Cytoplasmic aconitate hydratase (ACO1) from Oryctolagus cuniculus (Rabbit).